The chain runs to 393 residues: Phosphoglycerate kinase (393 aa).

Residues 21–23 (DLN), Arg36, 59–62 (HLGR), Arg113, and Arg146 each bind substrate. Residues Lys197, Glu319, and 345–348 (GGDT) contribute to the ATP site.

The protein belongs to the phosphoglycerate kinase family. As to quaternary structure, monomer.

The protein localises to the cytoplasm. It catalyses the reaction (2R)-3-phosphoglycerate + ATP = (2R)-3-phospho-glyceroyl phosphate + ADP. It participates in carbohydrate degradation; glycolysis; pyruvate from D-glyceraldehyde 3-phosphate: step 2/5. The chain is Phosphoglycerate kinase from Nitratidesulfovibrio vulgaris (strain DP4) (Desulfovibrio vulgaris).